Consider the following 474-residue polypeptide: tRNA-2-methylthio-N(6)-dimethylallyladenosine synthase (474 aa).

The 118-residue stretch at 3-120 folds into the MTTase N-terminal domain; the sequence is KKLHIKTWGC…LPEMINSVRG (118 aa). [4Fe-4S] cluster is bound by residues Cys-12, Cys-49, Cys-83, Cys-157, Cys-161, and Cys-164. A Radical SAM core domain is found at 143 to 375; the sequence is RAEGPTAFVS…QERINQQAMA (233 aa). The TRAM domain occupies 378–441; sequence RRMLGTVQRI…TNSLRGKVVR (64 aa).

This sequence belongs to the methylthiotransferase family. MiaB subfamily. In terms of assembly, monomer. It depends on [4Fe-4S] cluster as a cofactor.

Its subcellular location is the cytoplasm. The enzyme catalyses N(6)-dimethylallyladenosine(37) in tRNA + (sulfur carrier)-SH + AH2 + 2 S-adenosyl-L-methionine = 2-methylsulfanyl-N(6)-dimethylallyladenosine(37) in tRNA + (sulfur carrier)-H + 5'-deoxyadenosine + L-methionine + A + S-adenosyl-L-homocysteine + 2 H(+). Functionally, catalyzes the methylthiolation of N6-(dimethylallyl)adenosine (i(6)A), leading to the formation of 2-methylthio-N6-(dimethylallyl)adenosine (ms(2)i(6)A) at position 37 in tRNAs that read codons beginning with uridine. In Citrobacter koseri (strain ATCC BAA-895 / CDC 4225-83 / SGSC4696), this protein is tRNA-2-methylthio-N(6)-dimethylallyladenosine synthase.